Consider the following 1085-residue polypeptide: DNA repair and recombination protein RAD26 (1085 aa).

S30 is modified (phosphoserine). 2 disordered regions span residues 118–141 (KEQV…GETE) and 190–219 (NLTD…EEND). Over residues 128-141 (KGSKEGLQRPGETE) the composition is skewed to basic and acidic residues. Acidic residues predominate over residues 210–219 (SEDDEEEEND). The 210-residue stretch at 309-518 (YELYQQNCGG…WSLFDFIFPG (210 aa)) folds into the Helicase ATP-binding domain. 322–329 (DEMGLGKT) contributes to the ATP binding site. Positions 469-472 (DEGH) match the DEGH box motif. Residues 655 to 818 (VVKQLLLLWH…KRFFKIHELH (164 aa)) enclose the Helicase C-terminal domain.

It belongs to the SNF2/RAD54 helicase family.

The protein localises to the nucleus. The enzyme catalyses ATP + H2O = ADP + phosphate + H(+). Its function is as follows. May be involved in the preferential repair of active genes. This chain is DNA repair and recombination protein RAD26 (RAD26), found in Saccharomyces cerevisiae (strain ATCC 204508 / S288c) (Baker's yeast).